Reading from the N-terminus, the 109-residue chain is Biphenyl dioxygenase ferredoxin subunit (109 aa).

One can recognise a Rieske domain in the interval 4 to 100 (TKACSVDEVP…IRIEGRDVLV (97 aa)). [2Fe-2S] cluster is bound by residues C43, H45, C63, and H66.

Belongs to the bacterial ring-hydroxylating dioxygenase ferredoxin component family. This dioxygenase system consists of four proteins: the two subunits of the hydroxylase component (BphA1 and BphA2), a ferredoxin (BphA3) and a ferredoxin reductase (BphA4).

This protein seems to be a 2Fe-2S ferredoxin. In Pseudomonas sp. (strain KKS102), this protein is Biphenyl dioxygenase ferredoxin subunit (bphA3).